Reading from the N-terminus, the 196-residue chain is UPF0301 protein BF2109 (196 aa).

Belongs to the UPF0301 (AlgH) family.

In Bacteroides fragilis (strain ATCC 25285 / DSM 2151 / CCUG 4856 / JCM 11019 / LMG 10263 / NCTC 9343 / Onslow / VPI 2553 / EN-2), this protein is UPF0301 protein BF2109.